Consider the following 1165-residue polypeptide: uncharacterized protein (1165 aa).

The tract at residues 422–442 is disordered; the sequence is EAAPPRPPRKSKAPEPTGDKA.

This is an uncharacterized protein from Frog virus 3 (isolate Goorha) (FV-3).